Reading from the N-terminus, the 66-residue chain is Large ribosomal subunit protein bL33c (66 aa).

Belongs to the bacterial ribosomal protein bL33 family.

It localises to the plastid. The chain is Large ribosomal subunit protein bL33c (rpl33) from Epifagus virginiana (Beechdrops).